Here is a 317-residue protein sequence, read N- to C-terminus: GTPase Era (317 aa).

The region spanning 23–190 is the Era-type G domain; that stretch reads RSGFVALIGP…MDYLVETLPE (168 aa). The G1 stretch occupies residues 31 to 38; it reads GPTNAGKS. A GTP-binding site is contributed by 31-38; that stretch reads GPTNAGKS. Residues 57–61 are G2; that stretch reads QTTRA. Positions 78–81 are G3; sequence DTPG. Residues 78–82 and 140–143 contribute to the GTP site; these read DTPGI and NKID. Positions 140–143 are G4; the sequence is NKID. A G5 region spans residues 169-171; the sequence is ISA. The KH type-2 domain maps to 221 to 298; it reads LHQELPYASH…HLFLFVKVRE (78 aa).

The protein belongs to the TRAFAC class TrmE-Era-EngA-EngB-Septin-like GTPase superfamily. Era GTPase family. In terms of assembly, monomer.

Its subcellular location is the cytoplasm. The protein localises to the cell inner membrane. An essential GTPase that binds both GDP and GTP, with rapid nucleotide exchange. Plays a role in 16S rRNA processing and 30S ribosomal subunit biogenesis and possibly also in cell cycle regulation and energy metabolism. The chain is GTPase Era from Agrobacterium fabrum (strain C58 / ATCC 33970) (Agrobacterium tumefaciens (strain C58)).